The following is a 475-amino-acid chain: tRNA-2-methylthio-N(6)-dimethylallyladenosine synthase (475 aa).

The 118-residue stretch at 3–120 (KKLHIKTWGC…LPEMIDQIKD (118 aa)) folds into the MTTase N-terminal domain. The [4Fe-4S] cluster site is built by cysteine 12, cysteine 49, cysteine 83, cysteine 157, cysteine 161, and cysteine 164. The Radical SAM core domain occupies 143–375 (RAEGPSAFVS…QDRITQQAMR (233 aa)). Positions 378 to 441 (RQMVGTVQRI…TNSLRGVFIR (64 aa)) constitute a TRAM domain.

This sequence belongs to the methylthiotransferase family. MiaB subfamily. As to quaternary structure, monomer. Requires [4Fe-4S] cluster as cofactor.

It is found in the cytoplasm. The enzyme catalyses N(6)-dimethylallyladenosine(37) in tRNA + (sulfur carrier)-SH + AH2 + 2 S-adenosyl-L-methionine = 2-methylsulfanyl-N(6)-dimethylallyladenosine(37) in tRNA + (sulfur carrier)-H + 5'-deoxyadenosine + L-methionine + A + S-adenosyl-L-homocysteine + 2 H(+). In terms of biological role, catalyzes the methylthiolation of N6-(dimethylallyl)adenosine (i(6)A), leading to the formation of 2-methylthio-N6-(dimethylallyl)adenosine (ms(2)i(6)A) at position 37 in tRNAs that read codons beginning with uridine. In Shewanella pealeana (strain ATCC 700345 / ANG-SQ1), this protein is tRNA-2-methylthio-N(6)-dimethylallyladenosine synthase.